We begin with the raw amino-acid sequence, 107 residues long: MDKSKRLFLKSKRSFRRRLPPIQSGDRIDYRNISLISRFISQQGKILSRRVNRLTLKQQRLITIAIKQARILSLLPFRPKAQRFKKAQRFKRRQSTARTVGLRTRNK.

The segment covering 85-95 (KKAQRFKRRQS) has biased composition (basic residues). Residues 85–107 (KKAQRFKRRQSTARTVGLRTRNK) form a disordered region.

It belongs to the bacterial ribosomal protein bS18 family. Part of the 30S ribosomal subunit.

The protein localises to the plastid. It localises to the chloroplast. This is Small ribosomal subunit protein bS18c from Oenothera argillicola (Appalachian evening primrose).